The primary structure comprises 261 residues: INTITYDAGNTTINKYATFMESLRNEAKDPSLQCYGIPMLPNNSSTIKYLLVKLQGASQKTITLMLRRNNLYVMGYSDPFNGNCRYHIFNDITGTERTNVENTLCSSSSSRDAKPINYNSLYSTLEKKAEVNSRSQVQLGIQILSSDIGKISGQSSFTDKTEAKFLLVAIQMVSEAARFKYIENQVKTNFNRDFSPNDKILDLEENWGKISTAIHDATNGALPKPLELKNADGTKWIVLRVDEIKPDMGLLNYVNGTCQTT.

N-linked (GlcNAc...) asparagine; in PD-L1 and PD-L2 glycosylation is found at Asn-10 and Asn-43. Disulfide bonds link Cys-34–Cys-258 and Cys-84–Cys-105. The active site involves Tyr-72. Val-73 lines the substrate pocket. Ser-120 lines the substrate pocket. Catalysis depends on residues Tyr-122, Glu-175, and Arg-178. Arg-178 contributes to the substrate binding site. The N-linked (GlcNAc...) asparagine; in PD-L1 glycan is linked to Asn-255.

Belongs to the ribosome-inactivating protein family. Type 1 RIP subfamily. Post-translationally, N-glycosylated. Loss of glycosylation does not affect DNA-cleaving ability. Loss of glycosylation does not affect protein synthesis inhibition, but increases adenine polynucleotide glycosidase activity likely as a consequence of the increased accessibility of substrates to the active site pocket in the absence of glycosylation. In terms of tissue distribution, expressed in leaves (at protein level).

The enzyme catalyses Endohydrolysis of the N-glycosidic bond at one specific adenosine on the 28S rRNA.. Inhibits protein synthesis. Has adenine polynucleotide glycosidase activity on herring sperm (hs)DNA and poly(A) substrates. Cleaves supercoiled pBR322 dsDNA. This is Ribosome-inactivating protein PD-L1/PD-L2 from Phytolacca dioica (Bella sombra tree).